The following is a 476-amino-acid chain: MAPGLARISLRSQLLPLVPLLLLLRGAGCGHRVPSWSSLPSAADSVQRDRDLQQSPGDAAAALGPGAQDIVAVHMLRLYEKYNRRGAPPGGGNTVRSFRARLDVIDQKPVYFFNLTSMQDSEMILTATFHFYSEPPRWPRAREVFCKPRAKNASCRLLTPGLPARLHLIFRSLSQNTATQGLLRGAMALTPPPRGLWQAKDISSIIKAARRDGELLLSAQLDSGEKDLGVPRPSSHMPYILVYANDLAISEPNSVAVTLQRYDPFPAGDFEPGAAPNSSADPRVRRAAQVSKPLQDNELPGLDERPAPALHAQHFHKHEFWSSPFRALKPRTGRKDRKKKDQDTFTPSSSQVLDFDEKTMQKARRRQWDEPRVCSRRYLKVDFADIGWNEWIISPKSFDAYYCAGACEFPMPKIVRPSNHATIQSIVRAVGIVPGIPEPCCVPDKMNSLGVLFLDENRNVVLKVYPNMSVETCACR.

Residues 1–29 (MAPGLARISLRSQLLPLVPLLLLLRGAGC) form the signal peptide. A propeptide spanning residues 30-366 (GHRVPSWSSL…EKTMQKARRR (337 aa)) is cleaved from the precursor. N-linked (GlcNAc...) asparagine glycans are attached at residues Asn114, Asn152, and Asn277. 2 disordered regions span residues 268–305 (GDFEPGAAPNSSADPRVRRAAQVSKPLQDNELPGLDER) and 330–358 (PRTGRKDRKKKDQDTFTPSSSQVLDFDEK). Intrachain disulfides connect Cys374–Cys441, Cys403–Cys473, and Cys407–Cys475. Asn467 carries N-linked (GlcNAc...) asparagine glycosylation.

It belongs to the TGF-beta family. In terms of assembly, homodimer or heterodimer. Can form a non-covalent complex of the mature region and the pro-region. As to expression, costa, costicartilage, femur, calvaria, trachea, aorta and brain. Predominantly in the cerebellum.

The protein localises to the secreted. Its function is as follows. Growth factor involved in osteogenesis and adipogenesis. Plays an inhibitory role in the process of osteoblast differentiation via SMAD2/3 pathway. Plays an inhibitory role in the process of adipogenesis. The polypeptide is Growth/differentiation factor 10 (Rattus norvegicus (Rat)).